The following is a 1218-amino-acid chain: Formin-A (1218 aa).

A C2 domain is found at Met1–Val108. One can recognise a GBD/FH3 domain in the interval Glu139–Gly539. Residues Leu563–Lys638 adopt a coiled-coil conformation. Positions Gln634 to Val762 are disordered. Positions Ala649 to Gly747 are enriched in pro residues. Residues Pro652–Pro737 enclose the FH1 domain. Residues Arg759–Leu1155 enclose the FH2 domain. A coiled-coil region spans residues Ser1034–Ser1061. Disordered regions lie at residues Lys1153–Val1179 and Lys1198–Leu1218. The DAD domain occupies Gly1174 to Gln1209.

It belongs to the formin homology family. Diaphanous subfamily. As to quaternary structure, interacts (via GBD/FH3 domain) with activated Rho-GTPases.

Functionally, formins play an important role in the nucleation of actin and the formation of linear actin filaments. This chain is Formin-A (forA), found in Dictyostelium discoideum (Social amoeba).